A 645-amino-acid polypeptide reads, in one-letter code: Acetyl-coenzyme A synthetase (645 aa).

Residues 190 to 193 (RGGR) and T308 contribute to the CoA site. ATP contacts are provided by residues 384–386 (GEP), 408–413 (DTWWQT), D497, and R512. CoA is bound at residue S520. Residue R523 coordinates ATP. Positions 534, 536, and 539 each coordinate Mg(2+). K606 carries the N6-acetyllysine modification.

This sequence belongs to the ATP-dependent AMP-binding enzyme family. Mg(2+) is required as a cofactor. Post-translationally, acetylated. Deacetylation by the SIR2-homolog deacetylase activates the enzyme.

It carries out the reaction acetate + ATP + CoA = acetyl-CoA + AMP + diphosphate. Functionally, catalyzes the conversion of acetate into acetyl-CoA (AcCoA), an essential intermediate at the junction of anabolic and catabolic pathways. AcsA undergoes a two-step reaction. In the first half reaction, AcsA combines acetate with ATP to form acetyl-adenylate (AcAMP) intermediate. In the second half reaction, it can then transfer the acetyl group from AcAMP to the sulfhydryl group of CoA, forming the product AcCoA. This chain is Acetyl-coenzyme A synthetase, found in Saccharophagus degradans (strain 2-40 / ATCC 43961 / DSM 17024).